We begin with the raw amino-acid sequence, 339 residues long: MMMHELPVPIHQSPGSENHSNPASREQSKPKKETERRLPSGAKVDFGNGSGSKKQQSNQKPKKGSDSEKKKANRANSPALPNGEKPNFYNDNKEKNKKLLDPSLPNGAKPNFSFYSESNSNSNSNVSSNSNKTKKKVHEQSLPSGEKPVFHDKPNKKTSSSNRPDKNGKKGPVEETYAGSSFHSSPAALNLPKPSFQRTSPKQQANTINDENSSPSSSASSVSMSSPRPVAGAVAAPPRYPVTAYPPGSIPGAVPNVPAGYYPPQYAQPQYIQPGFTYNVNPQGYIQYQYPPFHHPLAPAQIPYQQHPFPVNAQPPAHVGSAPQGQKISFDDLLGSAKK.

Disordered stretches follow at residues 1–240 (MMMH…PPRY) and 309–339 (FPVN…SAKK). A compositionally biased stretch (polar residues) spans 13-25 (SPGSENHSNPASR). Composition is skewed to basic and acidic residues over residues 26–38 (EQSK…ERRL) and 91–100 (DNKEKNKKLL). The segment covering 111–131 (NFSFYSESNSNSNSNVSSNSN) has biased composition (low complexity). A compositionally biased stretch (basic and acidic residues) spans 163–173 (RPDKNGKKGPV). Residues 196-212 (FQRTSPKQQANTINDEN) show a composition bias toward polar residues. A compositionally biased stretch (low complexity) spans 213–237 (SSPSSSASSVSMSSPRPVAGAVAAP).

It belongs to the EDC family.

It is found in the cytoplasm. Functionally, mRNA-binding protein which stimulates mRNA decapping. The sequence is that of Enhancer of mRNA-decapping protein 1 (EDC1) from Scheffersomyces stipitis (strain ATCC 58785 / CBS 6054 / NBRC 10063 / NRRL Y-11545) (Yeast).